A 218-amino-acid chain; its full sequence is Large ribosomal subunit protein uL2c (218 aa).

The tract at residues 165-192 is disordered; the sequence is GVVKNPVDHPHGGGEGRSPIGRSHPVTP.

The protein belongs to the universal ribosomal protein uL2 family. In terms of assembly, part of the 50S ribosomal subunit.

The protein localises to the plastid. It localises to the chloroplast. The polypeptide is Large ribosomal subunit protein uL2c (rpl2) (Bigelowiella natans (Pedinomonas minutissima)).